A 485-amino-acid chain; its full sequence is Warthog protein 1 (485 aa).

The first 21 residues, 1–21 (MMVMNPLTATFLAALIGTAAS), serve as a signal peptide directing secretion. Residues 236–258 (DQRLSPSTDVQSDSYVSPTEADP) are disordered. Residues 239-252 (LSPSTDVQSDSYVS) are compositionally biased toward polar residues.

Belongs to the hedgehog family. The C-terminal domain displays an autoproteolysis activity.

Its subcellular location is the secreted. The protein resides in the cell surface. It is found in the cell membrane. The protein localises to the extracellular space. Its function is as follows. Intercellular signal essential for a variety of patterning events during development. This chain is Warthog protein 1 (wrt-1), found in Caenorhabditis elegans.